Here is a 497-residue protein sequence, read N- to C-terminus: 3-octaprenyl-4-hydroxybenzoate carboxy-lyase (497 aa).

N175 lines the Mn(2+) pocket. Prenylated FMN contacts are provided by residues 178–180 (IYR), 192–194 (RWL), and 197–198 (RG). Position 241 (E241) interacts with Mn(2+). D290 functions as the Proton donor in the catalytic mechanism.

This sequence belongs to the UbiD family. In terms of assembly, homohexamer. The cofactor is prenylated FMN. Mn(2+) is required as a cofactor.

It is found in the cell membrane. It catalyses the reaction a 4-hydroxy-3-(all-trans-polyprenyl)benzoate + H(+) = a 2-(all-trans-polyprenyl)phenol + CO2. It functions in the pathway cofactor biosynthesis; ubiquinone biosynthesis. Catalyzes the decarboxylation of 3-octaprenyl-4-hydroxy benzoate to 2-octaprenylphenol, an intermediate step in ubiquinone biosynthesis. The chain is 3-octaprenyl-4-hydroxybenzoate carboxy-lyase from Shigella boydii serotype 4 (strain Sb227).